The primary structure comprises 154 residues: RxLR effector protein PITG_12737 (154 aa).

The N-terminal stretch at 1 to 16 is a signal peptide; it reads MRVYFILILAVATVSG. Positions 42 to 58 match the RxLR-dEER motif; that stretch reads RLLRAELTTDETYPEER.

The protein belongs to the RxLR effector family.

The protein localises to the secreted. Its subcellular location is the host nucleus. It localises to the host cytoplasm. Its function is as follows. Effector that enhances P.infestans colonization of Nicotiana benthamiana leaves. The polypeptide is RxLR effector protein PITG_12737 (Phytophthora infestans (strain T30-4) (Potato late blight agent)).